The chain runs to 358 residues: Alanine racemase (358 aa).

The active-site Proton acceptor; specific for D-alanine is Lys-35. Lys-35 is modified (N6-(pyridoxal phosphate)lysine). Residue Arg-130 coordinates substrate. Tyr-255 serves as the catalytic Proton acceptor; specific for L-alanine. Met-303 lines the substrate pocket.

Belongs to the alanine racemase family. The cofactor is pyridoxal 5'-phosphate.

It carries out the reaction L-alanine = D-alanine. It functions in the pathway amino-acid biosynthesis; D-alanine biosynthesis; D-alanine from L-alanine: step 1/1. Functionally, catalyzes the interconversion of L-alanine and D-alanine. May also act on other amino acids. This chain is Alanine racemase (alr), found in Shewanella sp. (strain W3-18-1).